We begin with the raw amino-acid sequence, 531 residues long: Protein tweety homolog 2-like (531 aa).

Over 1–44 (MASSRQDYIAPWWTYWLHNFPHLNFNFQTVDNTFKPEDASYQQS) the chain is Extracellular. The chain crosses the membrane as a helical span at residues 45-65 (LVFLACVSAVALGLCLLLLSV). Over 66-87 (YLTCLCCCRREEDEEVKRPDTC) the chain is Cytoplasmic. Residues 88–108 (CVTWAAVITGLVICSAVGVGF) traverse the membrane as a helical segment. Residues 109–213 (YGNSETNDGV…RTAFIEYYRW (105 aa)) lie on the Extracellular side of the membrane. Asparagine 129 carries N-linked (GlcNAc...) asparagine glycosylation. A helical membrane pass occupies residues 214-234 (LTYLLLLILDLVICLLACLAL). At 235–239 (AKQSR) the chain is on the cytoplasmic side. A helical membrane pass occupies residues 240–260 (WLLTVIMVCGMLTLIMSWASL). Over 261 to 389 (GAGTATAVGT…GVCYDGVEGL (129 aa)) the chain is Extracellular. Asparagine 283 and asparagine 352 each carry an N-linked (GlcNAc...) asparagine glycan. Residues 390 to 410 (LYLCLFSLLAACAFCALLCAV) form a helical membrane-spanning segment. The Cytoplasmic portion of the chain corresponds to 411–531 (PRAWMLIAIR…IRHFGTDFQV (121 aa)).

It belongs to the tweety family.

Its subcellular location is the cell membrane. Its function is as follows. Probable large-conductance Ca(2+)-activated chloride channel. This chain is Protein tweety homolog 2-like (ttyh2l), found in Danio rerio (Zebrafish).